A 639-amino-acid polypeptide reads, in one-letter code: Eukaryotic translation initiation factor 2-alpha kinase 2 (639 aa).

Residues 171-588 (FEEYSLLGRG…LEVLNCGLLL (418 aa)) enclose the Protein kinase domain. Residues 177–185 (LGRGGFGSV) and Lys-200 each bind ATP. Residues 298 to 320 (ISTSRKSSYSSTTESSNFENLES) are compositionally biased toward low complexity. The tract at residues 298–322 (ISTSRKSSYSSTTESSNFENLESPR) is disordered. Residue Asp-417 is the Proton acceptor of the active site.

This sequence belongs to the protein kinase superfamily. Ser/Thr protein kinase family. GCN2 subfamily. Post-translationally, autophosphorylated.

It carries out the reaction L-seryl-[protein] + ATP = O-phospho-L-seryl-[protein] + ADP + H(+). The enzyme catalyses L-threonyl-[protein] + ATP = O-phospho-L-threonyl-[protein] + ADP + H(+). Functionally, mediates down-regulation of protein synthesis in response to stress conditions by the phosphorylation of the alpha subunit of eIF-2 (tif211) on 'Ser-52'. Protein synthesis is inhibited at the level of initiation. Activity is inhibited in the presence of heme. The sequence is that of Eukaryotic translation initiation factor 2-alpha kinase 2 (hri2) from Schizosaccharomyces pombe (strain 972 / ATCC 24843) (Fission yeast).